The sequence spans 475 residues: UDP-N-acetylmuramate--L-alanine ligase (475 aa).

117–123 (GTHGKTT) is an ATP binding site.

Belongs to the MurCDEF family.

It is found in the cytoplasm. The catalysed reaction is UDP-N-acetyl-alpha-D-muramate + L-alanine + ATP = UDP-N-acetyl-alpha-D-muramoyl-L-alanine + ADP + phosphate + H(+). Its pathway is cell wall biogenesis; peptidoglycan biosynthesis. Its function is as follows. Cell wall formation. The sequence is that of UDP-N-acetylmuramate--L-alanine ligase from Chlorobaculum tepidum (strain ATCC 49652 / DSM 12025 / NBRC 103806 / TLS) (Chlorobium tepidum).